Consider the following 120-residue polypeptide: MLDSSIMLIVKWFVGLMLIMMMVAVSLFCIQLSDVNLYKQQVNYQIERHGGLTKEAGAYLKDYSEKQYQGALSVKSDQLNKKVNFGDVVDYQVVANLKIILFNLPDVEMKFHGSATSQVR.

The helical transmembrane segment at 8-28 threads the bilayer; the sequence is LIVKWFVGLMLIMMMVAVSLF.

It localises to the membrane. This is an uncharacterized protein from Bacillus anthracis.